The sequence spans 88 residues: Protein ORGAN SIZE RELATED 1 (88 aa).

Residues 25–76 (ITARSVALLLFLSLLLLILPPFLPPLPPPPATLLLLPLLLMILLIFLAFSPS) are organ Size Related (OSR) domain. 2 helical membrane passes run 30-50 (VALL…LPPL) and 53-73 (PPAT…FLAF).

It belongs to the plant organ size related (OSR) protein family. In terms of tissue distribution, mostly expressed in flowers, and, to a lower extent, in leaves and cotyledons.

It localises to the membrane. It is found in the endoplasmic reticulum. The protein resides in the nucleus. Its subcellular location is the cytoplasm. In terms of biological role, together with ARGOS and ARL, regulates organ growth and final organ size. Promotes both cell expansion and proliferation-dependent organ growth, in an ANT-dependent manner. This chain is Protein ORGAN SIZE RELATED 1, found in Arabidopsis thaliana (Mouse-ear cress).